The sequence spans 506 residues: Cysteine--tRNA ligase (506 aa).

Cys-34 lines the Zn(2+) pocket. The 'HIGH' region motif lies at 36–46 (PTVYDFAHIGN). Zn(2+) contacts are provided by Cys-230, His-269, and Glu-273. Positions 302–306 (KMSKS) match the 'KMSKS' region motif. An ATP-binding site is contributed by Lys-305.

It belongs to the class-I aminoacyl-tRNA synthetase family. Monomer. Zn(2+) is required as a cofactor.

The protein resides in the cytoplasm. It catalyses the reaction tRNA(Cys) + L-cysteine + ATP = L-cysteinyl-tRNA(Cys) + AMP + diphosphate. This Brucella abortus (strain S19) protein is Cysteine--tRNA ligase.